A 675-amino-acid chain; its full sequence is Cysteine-rich receptor-like protein kinase 25 (675 aa).

Positions 1 to 25 are cleaved as a signal peptide; it reads MSSCFKSSVSLFSVFLFMILKTVTS. At 26 to 281 the chain is on the extracellular side; sequence DPTYLYHICP…IPSEKGKGKN (256 aa). 2 Gnk2-homologous domains span residues 28 to 134 and 140 to 247; these read TYLY…NQSI and IRPG…LYPF. Asn-36, Asn-43, Asn-77, Asn-106, Asn-131, Asn-151, Asn-161, Asn-188, Asn-249, and Asn-281 each carry an N-linked (GlcNAc...) asparagine glycan. The helical transmembrane segment at 282 to 302 threads the bilayer; the sequence is LTVIVTAIAVPVSVCVLLLGA. Over 303–675 the chain is Cytoplasmic; that stretch reads MCWLLARRRN…DSSITIVYPR (373 aa). The 276-residue stretch at 347-622 folds into the Protein kinase domain; that stretch reads FSESNKLGHG…DILVMMNSFT (276 aa). ATP-binding positions include 353-361 and Lys-375; that span reads LGHGGFGEV. Tyr-420 is modified (phosphotyrosine). The active-site Proton acceptor is Asp-472. Ser-476 is subject to Phosphoserine. Thr-512 carries the phosphothreonine modification. Position 520 is a phosphotyrosine (Tyr-520). The tract at residues 638–661 is disordered; it reads MKDSRDPRSGGSASDHSATSKSLP. Over residues 648 to 661 the composition is skewed to polar residues; sequence GSASDHSATSKSLP.

Belongs to the protein kinase superfamily. Ser/Thr protein kinase family. CRK subfamily.

The protein localises to the membrane. It catalyses the reaction L-seryl-[protein] + ATP = O-phospho-L-seryl-[protein] + ADP + H(+). It carries out the reaction L-threonyl-[protein] + ATP = O-phospho-L-threonyl-[protein] + ADP + H(+). The chain is Cysteine-rich receptor-like protein kinase 25 (CRK25) from Arabidopsis thaliana (Mouse-ear cress).